We begin with the raw amino-acid sequence, 80 residues long: MKYPLMPLVNDLTFSFLVFWFCLPVGLLLLLIIWLRFLLSQDSEENDSSVCLDWEPWSKGPAEFCWKGTLHGQEKERPCW.

The helical transmembrane segment at 14–34 threads the bilayer; that stretch reads FSFLVFWFCLPVGLLLLLIIW.

The protein belongs to the adipogenin family.

Its subcellular location is the membrane. It localises to the nucleus. Its function is as follows. Plays a role in stimulating adipocyte differentiation and development. In Homo sapiens (Human), this protein is Adipogenin.